We begin with the raw amino-acid sequence, 309 residues long: T-lymphocyte activation antigen CD86 (309 aa).

The first 23 residues, Met-1–Ala-23, serve as a signal peptide directing secretion. Residues Val-24–Lys-244 are Extracellular-facing. Asn-33, Asn-47, Asn-92, Asn-135, Asn-146, Asn-154, Asn-175, Asn-190, and Asn-231 each carry an N-linked (GlcNAc...) asparagine glycan. Residues Asn-33–Thr-128 enclose the Ig-like V-type domain. The cysteines at positions 40 and 110 are disulfide-linked. The 74-residue stretch at Asn-150 to Met-223 folds into the Ig-like C2-type domain. Cysteines 157 and 216 form a disulfide. Residues Glu-245 to His-265 traverse the membrane as a helical segment. Residues Lys-266–Glu-309 are Cytoplasmic-facing. The segment covering Asn-269 to Ser-279 has biased composition (polar residues). Residues Asn-269 to Glu-309 are disordered. Residues Lys-280–Glu-298 are compositionally biased toward basic and acidic residues.

Homodimer. Interacts with MARCH8. Interacts (via cytoplasmic domain) with PHB1 and PHB2; the interactions increases after priming with CD40. Interacts with CD28. Polyubiquitinated; which is promoted by MARCH8 and results in endocytosis and lysosomal degradation. In terms of tissue distribution, expressed on activated B-cells.

It localises to the cell membrane. Receptor involved in the costimulatory signal essential for T-lymphocyte proliferation and interleukin-2 production, by binding CD28 or CTLA-4. May play a critical role in the early events of T-cell activation and costimulation of naive T-cells, such as deciding between immunity and anergy that is made by T-cells within 24 hours after activation. Also involved in the regulation of B cells function, plays a role in regulating the level of IgG(1) produced. Upon CD40 engagement, activates NF-kappa-B signaling pathway via phospholipase C and protein kinase C activation. This is T-lymphocyte activation antigen CD86 (Cd86) from Mus musculus (Mouse).